The following is a 1173-amino-acid chain: Ubiquitin conjugation factor E4 B (1173 aa).

M1 is modified (N-acetylmethionine). A disordered region spans residues 1–155 (MEELSADEIR…EPSSGPEVSE (155 aa)). The span at 16-33 (RLAGGQTSQPTTPLTSPQ) shows a compositional bias: low complexity. Phosphoserine occurs at positions 23 and 31. Polar residues predominate over residues 51 to 64 (QSLGLNVHNMTPAT). A compositionally biased stretch (low complexity) spans 76-99 (SQSSEGVSSLSSSPSNSLETQSQS). Phosphoserine occurs at positions 84, 88, 90, 101, 103, 105, and 124. Basic and acidic residues predominate over residues 134–147 (NDRREKRSLSDKEP). Residues S238, S674, and S840 each carry the phosphoserine modification. The disordered stretch occupies residues 928 to 948 (NKEQWDQLPRDQQQARQSQLA). Residues 937-948 (RDQQQARQSQLA) are compositionally biased toward low complexity. Positions 1098 to 1171 (DAPDEFRDPL…QAWMREKQSS (74 aa)) constitute a U-box domain. Residue S1136 is modified to Phosphoserine.

The protein belongs to the ubiquitin conjugation factor E4 family. As to quaternary structure, interacts with VCP. Interacts with STUB1/CHIP and UNC45B. In terms of processing, proteolytically cleaved by caspases during apoptosis. Cleaved efficiently at Asp-123 by caspase-6 and granzyme B. Cleaved with approximately 10-fold less efficiency at Asp-109 by caspase-3 and caspase-7. In terms of tissue distribution, expressed predominantly in neuronal tissues. Also detected in liver, heart, brain, kidney and testis.

Its subcellular location is the cytoplasm. It localises to the nucleus. It catalyses the reaction S-ubiquitinyl-[E2 ubiquitin-conjugating enzyme]-L-cysteine + [acceptor protein]-L-lysine = [E2 ubiquitin-conjugating enzyme]-L-cysteine + N(6)-ubiquitinyl-[acceptor protein]-L-lysine.. It functions in the pathway protein modification; protein ubiquitination. In terms of biological role, ubiquitin-protein ligase that probably functions as an E3 ligase in conjunction with specific E1 and E2 ligases. May also function as an E4 ligase mediating the assembly of polyubiquitin chains on substrates ubiquitinated by another E3 ubiquitin ligase. May regulate myosin assembly in striated muscles together with STUB1 and VCP/p97 by targeting myosin chaperone UNC45B for proteasomal degradation. This is Ubiquitin conjugation factor E4 B from Mus musculus (Mouse).